The following is a 248-amino-acid chain: Phycocyanobilin:ferredoxin oxidoreductase (248 aa).

This sequence belongs to the HY2 family.

The enzyme catalyses (2R,3Z)-phycocyanobilin + 4 oxidized [2Fe-2S]-[ferredoxin] = biliverdin IXalpha + 4 reduced [2Fe-2S]-[ferredoxin] + 4 H(+). In terms of biological role, catalyzes the four-electron reduction of biliverdin IX-alpha (2-electron reduction at both the A and D rings); the reaction proceeds via an isolatable 2-electron intermediate, 181,182-dihydrobiliverdin. The chain is Phycocyanobilin:ferredoxin oxidoreductase from Synechococcus sp. (strain ATCC 27144 / PCC 6301 / SAUG 1402/1) (Anacystis nidulans).